The following is a 524-amino-acid chain: Apoptosis inhibitor 5 (524 aa).

Positions 2–360 (PTVEELYRNY…HQLGRKLPDF (359 aa)) are ARM-like and Heat-like helical repeats. The residue at position 251 (K251) is an N6-acetyllysine. The interval 370–391 (LKDFKIRLQYFARGLQVYIRQL) is leucine-zipper. T399 carries the post-translational modification Phosphothreonine. The disordered stretch occupies residues 452 to 524 (GQKRASEDTT…RGNRSRGRLY (73 aa)). Residues 454-475 (KRASEDTTSGSPPKKSSAGPKR) carry the Nuclear localization signal motif. Residues S462, S464, and S469 each carry the phosphoserine modification. Over residues 462–472 (SGSPPKKSSAG) the composition is skewed to low complexity. Residues 487-497 (KYSSNLGNFNY) are compositionally biased toward polar residues. R500 carries the post-translational modification Omega-N-methylarginine.

It belongs to the API5 family. In terms of assembly, monomer. Interacts with FGF2 and ACIN1. In terms of processing, acetylation at Lys-251 impairs antiapoptotic function. In terms of tissue distribution, expressed in all tissues tested, including heart, brain, placenta, lung, liver, skeletal muscle, kidney and pancreas. Highest levels in heart, pancreas and placenta. Highly expressed in several cancers. Preferentially expressed in squamous cell carcinoma versus adenocarcinoma in non-small cell lung cancer.

The protein resides in the nucleus. Its subcellular location is the cytoplasm. Antiapoptotic factor that may have a role in protein assembly. Negatively regulates ACIN1. By binding to ACIN1, it suppresses ACIN1 cleavage from CASP3 and ACIN1-mediated DNA fragmentation. Also known to efficiently suppress E2F1-induced apoptosis. Its depletion enhances the cytotoxic action of the chemotherapeutic drugs. This Homo sapiens (Human) protein is Apoptosis inhibitor 5.